The primary structure comprises 219 residues: Guanylate kinase (219 aa).

The region spanning 15–194 (GLMLVISSPS…AFSSVRAIVE (180 aa)) is the Guanylate kinase-like domain. ATP is bound at residue 22–29 (SPSGAGKS).

The protein belongs to the guanylate kinase family.

It is found in the cytoplasm. The catalysed reaction is GMP + ATP = GDP + ADP. Functionally, essential for recycling GMP and indirectly, cGMP. In Rhizobium meliloti (strain 1021) (Ensifer meliloti), this protein is Guanylate kinase.